The following is a 590-amino-acid chain: Aspartate--tRNA(Asp/Asn) ligase (590 aa).

Glutamate 173 provides a ligand contact to L-aspartate. The segment at 197 to 200 is aspartate; that stretch reads QIFK. L-aspartate is bound at residue arginine 219. ATP contacts are provided by residues 219 to 221 and glutamine 228; that span reads RDE. An L-aspartate-binding site is contributed by histidine 450. Glutamate 484 lines the ATP pocket. Residue arginine 491 participates in L-aspartate binding. 536 to 539 contacts ATP; that stretch reads GLDR.

The protein belongs to the class-II aminoacyl-tRNA synthetase family. Type 1 subfamily. In terms of assembly, homodimer.

It is found in the cytoplasm. It carries out the reaction tRNA(Asx) + L-aspartate + ATP = L-aspartyl-tRNA(Asx) + AMP + diphosphate. Functionally, aspartyl-tRNA synthetase with relaxed tRNA specificity since it is able to aspartylate not only its cognate tRNA(Asp) but also tRNA(Asn). Reaction proceeds in two steps: L-aspartate is first activated by ATP to form Asp-AMP and then transferred to the acceptor end of tRNA(Asp/Asn). The sequence is that of Aspartate--tRNA(Asp/Asn) ligase from Coxiella burnetii (strain RSA 493 / Nine Mile phase I).